A 538-amino-acid chain; its full sequence is Cytochrome P450 18a1 (538 aa).

A helical transmembrane segment spans residues 24–44 (QHLLMVFLGLLALVTLLQWLV). Heme is bound at residue Cys-466.

The protein belongs to the cytochrome P450 family. The cofactor is heme. Expressed in body wall (epidermal and muscle cells) and mid- and hind-gut.

The protein resides in the endoplasmic reticulum membrane. The protein localises to the microsome membrane. Probably involved in steroid hormones biosynthesis. The polypeptide is Cytochrome P450 18a1 (Cyp18a1) (Drosophila melanogaster (Fruit fly)).